Reading from the N-terminus, the 247-residue chain is ATP synthase subunit a, chloroplastic (247 aa).

5 helical membrane passes run 38 to 58 (QVLITSWVVITILLGSVIIAV), 95 to 115 (VPFIGTMFLFIFVSNWSGALL), 134 to 154 (INTTVALALLTSAAYFYAGLS), 199 to 219 (LVVVVLVSLVPLVVPIPVMFL), and 220 to 240 (GLFTSGIQALIFATLAAAYIG).

Belongs to the ATPase A chain family. F-type ATPases have 2 components, CF(1) - the catalytic core - and CF(0) - the membrane proton channel. CF(1) has five subunits: alpha(3), beta(3), gamma(1), delta(1), epsilon(1). CF(0) has four main subunits: a, b, b' and c.

The protein resides in the plastid. Its subcellular location is the chloroplast thylakoid membrane. Key component of the proton channel; it plays a direct role in the translocation of protons across the membrane. The polypeptide is ATP synthase subunit a, chloroplastic (Oryza sativa subsp. indica (Rice)).